Reading from the N-terminus, the 693-residue chain is Protein-glutamine gamma-glutamyltransferase E (693 aa).

Phosphotyrosine is present on Y111. At T112 the chain carries Phosphothreonine. Ca(2+)-binding residues include A222, N225, N227, D228, and N230. Residue C273 is part of the active site. The Ca(2+) site is built by D302, D304, N306, S308, and D325. Catalysis depends on residues H331 and D354. Positions 394, 416, 444, and 449 each coordinate Ca(2+). Positions 457–483 (LDKLKPNASFGATSSRNPEGEDKEPSI) are disordered.

Belongs to the transglutaminase superfamily. Transglutaminase family. As to quaternary structure, consists of two polypeptide chains, which are synthesized as a precursor form of a single polypeptide. It depends on Ca(2+) as a cofactor. In terms of processing, activated by proteolytic processing. In vitro activation is commonly achieved by cleavage with dispase, a neutral bacterial protease. Physiological activation may be catalyzed by CTSL and, to a lesser extent, by CTSS. In terms of tissue distribution, expressed in skin and stomach and, at lower levels, in testis, kidney and spleen (at protein level). On the basis of its catalytic activity, detected in the epidermis, around the granular and spinous layers but not in the outermost cornified layers. In hair follicles, mainly located in the medulla and the hair cortex.

It is found in the cytoplasm. The enzyme catalyses L-glutaminyl-[protein] + L-lysyl-[protein] = [protein]-L-lysyl-N(6)-5-L-glutamyl-[protein] + NH4(+). Functionally, catalyzes the calcium-dependent formation of isopeptide cross-links between glutamine and lysine residues in various proteins, as well as the conjugation of polyamines to proteins. Involved in the formation of the cornified envelope (CE), a specialized component consisting of covalent cross-links of proteins beneath the plasma membrane of terminally differentiated keratinocytes. Catalyzes small proline-rich proteins (SPRR1 and SPRR2) and LOR cross-linking to form small interchain oligomers, which are further cross-linked by TGM1 onto the growing CE scaffold. In hair follicles, involved in cross-linking structural proteins to hardening the inner root sheath. The sequence is that of Protein-glutamine gamma-glutamyltransferase E (Tgm3) from Mus musculus (Mouse).